Reading from the N-terminus, the 96-residue chain is Co-chaperonin GroES (96 aa).

This sequence belongs to the GroES chaperonin family. In terms of assembly, heptamer of 7 subunits arranged in a ring. Interacts with the chaperonin GroEL.

Its subcellular location is the cytoplasm. Its function is as follows. Together with the chaperonin GroEL, plays an essential role in assisting protein folding. The GroEL-GroES system forms a nano-cage that allows encapsulation of the non-native substrate proteins and provides a physical environment optimized to promote and accelerate protein folding. GroES binds to the apical surface of the GroEL ring, thereby capping the opening of the GroEL channel. This is Co-chaperonin GroES from Neisseria meningitidis serogroup A / serotype 4A (strain DSM 15465 / Z2491).